We begin with the raw amino-acid sequence, 313 residues long: Homoserine O-succinyltransferase (313 aa).

The active-site Acyl-thioester intermediate is the Cys142. Lys163 and Ser192 together coordinate substrate. The Proton acceptor role is filled by His235. Glu237 is an active-site residue. Arg249 lines the substrate pocket.

It belongs to the MetA family.

It is found in the cytoplasm. The catalysed reaction is L-homoserine + succinyl-CoA = O-succinyl-L-homoserine + CoA. It participates in amino-acid biosynthesis; L-methionine biosynthesis via de novo pathway; O-succinyl-L-homoserine from L-homoserine: step 1/1. Transfers a succinyl group from succinyl-CoA to L-homoserine, forming succinyl-L-homoserine. The protein is Homoserine O-succinyltransferase of Shewanella baltica (strain OS195).